The following is a 142-amino-acid chain: Large ribosomal subunit protein uL11 (142 aa).

It belongs to the universal ribosomal protein uL11 family. As to quaternary structure, part of the ribosomal stalk of the 50S ribosomal subunit. Interacts with L10 and the large rRNA to form the base of the stalk. L10 forms an elongated spine to which L12 dimers bind in a sequential fashion forming a multimeric L10(L12)X complex. One or more lysine residues are methylated.

Forms part of the ribosomal stalk which helps the ribosome interact with GTP-bound translation factors. This chain is Large ribosomal subunit protein uL11, found in Shewanella halifaxensis (strain HAW-EB4).